The chain runs to 385 residues: Zinc finger protein B385R (385 aa).

2 consecutive C2H2-type zinc fingers follow at residues 166-190 (LQCPNCGCIQELMGTIFDETHFYNH) and 168-190 (CPNCGCIQELMGTIFDETHFYNH).

This sequence belongs to the asfivirus B385R family.

This is Zinc finger protein B385R from African swine fever virus (isolate Tick/South Africa/Pretoriuskop Pr4/1996) (ASFV).